A 1902-amino-acid polypeptide reads, in one-letter code: PII-type proteinase (1902 aa).

The first 33 residues, 1 to 33 (MQRKKKGLSILLAGTVALGALAVLPVGEIQAKA), serve as a signal peptide directing secretion. Positions 34–187 (AISQQTKGSS…VTLAKVYYPT (154 aa)) are excised as a propeptide. The 507-residue stretch at 191 to 697 (ANSMANVQAV…AGLVDVKAAI (507 aa)) folds into the Peptidase S8 domain. Catalysis depends on charge relay system residues aspartate 217, histidine 281, and serine 620. Residues 1796-1874 (GKGDGTTGTS…GALPKTGETT (79 aa)) are disordered. A compositionally biased stretch (gly residues) spans 1797-1812 (KGDGTTGTSDKGGGQG). The span at 1830-1843 (SQPSSGGNIPTNPA) shows a compositional bias: polar residues. The LPXTG sorting signal motif lies at 1867–1871 (LPKTG). Pentaglycyl murein peptidoglycan amidated threonine is present on threonine 1870. Positions 1871–1902 (GETTERPAFGFLGVIVVSLMGVLGLKRKQREE) are cleaved as a propeptide — removed by sortase.

Belongs to the peptidase S8 family.

The protein localises to the secreted. It is found in the cell wall. The enzyme catalyses Endopeptidase activity with very broad specificity, although some subsite preference have been noted, e.g. large hydrophobic residues in the P1 and P4 positions, and Pro in the P2 position. Best known for its action on caseins, although it has been shown to hydrolyze hemoglobin and oxidized insulin B-chain.. Its function is as follows. Protease which breaks down milk proteins during the growth of the bacteria on milk. The chain is PII-type proteinase (prt) from Lactococcus lactis subsp. cremoris (Streptococcus cremoris).